The chain runs to 604 residues: Matrix metalloproteinase-21 (604 aa).

The signal sequence occupies residues 1–22 (MPSIKLLVWCCLCVISPRLCHS). A propeptide spanning residues 23–180 (EKLFHSRDRS…PDPPKIRRKR (158 aa)) is cleaved from the precursor. The tract at residues 132–175 (KPRCGVPDNQMAKKETEKPTAAQSLENKTKDSENVTQQNPDPPK) is disordered. The Cysteine switch signature appears at 133-140 (PRCGVPDN). Cys-135 contacts Zn(2+). Residues Asn-158 and Asn-165 are each glycosylated (N-linked (GlcNAc...) asparagine). His-318 serves as a coordination point for Zn(2+). The active site involves Glu-319. 2 residues coordinate Zn(2+): His-322 and His-328. The cysteines at positions 364 and 595 are disulfide-linked. Hemopexin repeat units lie at residues 365 to 424 (EGPF…WHGI), 426 to 482 (VQNI…FPGI), 483 to 531 (PSPI…FPAV), and 538 to 594 (KGNI…WFDI). N-linked (GlcNAc...) asparagine glycans are attached at residues Asn-404 and Asn-407.

It belongs to the peptidase M10A family. Zn(2+) serves as cofactor. Requires Ca(2+) as cofactor. The precursor is cleaved by a furin endopeptidase.

The protein resides in the secreted. Plays a specialized role in the generation of left-right asymmetry during embryogenesis. May act as a negative regulator of the NOTCH-signaling pathway. In Xenopus laevis (African clawed frog), this protein is Matrix metalloproteinase-21 (mmp21).